Consider the following 250-residue polypeptide: tRNA pseudouridine synthase A (250 aa).

Aspartate 52 functions as the Nucleophile in the catalytic mechanism. Tyrosine 111 lines the substrate pocket.

This sequence belongs to the tRNA pseudouridine synthase TruA family. Homodimer.

It catalyses the reaction uridine(38/39/40) in tRNA = pseudouridine(38/39/40) in tRNA. Its function is as follows. Formation of pseudouridine at positions 38, 39 and 40 in the anticodon stem and loop of transfer RNAs. The protein is tRNA pseudouridine synthase A of Methylobacterium sp. (strain 4-46).